The following is a 307-amino-acid chain: Ribosomal RNA large subunit methyltransferase F (307 aa).

Belongs to the methyltransferase superfamily. METTL16/RlmF family.

The protein localises to the cytoplasm. The catalysed reaction is adenosine(1618) in 23S rRNA + S-adenosyl-L-methionine = N(6)-methyladenosine(1618) in 23S rRNA + S-adenosyl-L-homocysteine + H(+). In terms of biological role, specifically methylates the adenine in position 1618 of 23S rRNA. This Bacteroides thetaiotaomicron (strain ATCC 29148 / DSM 2079 / JCM 5827 / CCUG 10774 / NCTC 10582 / VPI-5482 / E50) protein is Ribosomal RNA large subunit methyltransferase F.